A 401-amino-acid polypeptide reads, in one-letter code: Adenosine 3'-phospho 5'-phosphosulfate transporter 2 (401 aa).

Asn-12 and Asn-71 each carry an N-linked (GlcNAc...) asparagine glycan. Transmembrane regions (helical) follow at residues 78–98, 114–134, 147–167, 170–190, 196–216, and 223–243; these read LTQFFICVAGVFVFYLIYGYL, YLTLVQFAFYSIFGLIELQLI, MIIAFLTVGTMGLSNTSLGYL, PTQVIFKCCKLIPVMLGGVFI, NVADVSAAICMSLGLIWFTLA, and NFNLTGVVLISLALCADAVIG. N-linked (GlcNAc...) asparagine glycosylation is present at Asn-254. Transmembrane regions (helical) follow at residues 267–287, 298–317, 324–346, and 349–369; these read IGFVYILLGLTCTSGLGPAVT, GYAFLFSLTGYFGISFVLAL, LIAVTVTTGRKAMTIVLSFIFFA, and FTFQYVWSGLLVVLGIFLNVY.

The protein belongs to the nucleotide-sugar transporter family. SLC35B subfamily. Preferentially and highly expressed in colon.

The protein resides in the golgi apparatus membrane. The enzyme catalyses 3'-phosphoadenylyl sulfate(in) + adenosine 3',5'-bisphosphate(out) = 3'-phosphoadenylyl sulfate(out) + adenosine 3',5'-bisphosphate(in). Probably functions as a 3'-phosphoadenylyl sulfate:adenosine 3',5'-bisphosphate antiporter at the Golgi membranes. Mediates the transport from the cytosol into the lumen of the Golgi of 3'-phosphoadenylyl sulfate/adenosine 3'-phospho 5'-phosphosulfate (PAPS), a universal sulfuryl donor for sulfation events that take place in that compartment. This Homo sapiens (Human) protein is Adenosine 3'-phospho 5'-phosphosulfate transporter 2.